A 196-amino-acid chain; its full sequence is UPF0319 protein VV0948 (196 aa).

The signal sequence occupies residues 1-19 (MKKMMILSALALFSSSLFA).

Belongs to the UPF0319 family.

In Vibrio vulnificus (strain YJ016), this protein is UPF0319 protein VV0948.